Reading from the N-terminus, the 396-residue chain is Stearoyl-[acyl-carrier-protein] 9-desaturase, chloroplastic (396 aa).

The N-terminal 33 residues, Met-1 to Met-33, are a transit peptide targeting the chloroplast. Positions 138, 176, 179, 229, 262, and 265 each coordinate Fe cation.

Belongs to the fatty acid desaturase type 2 family. In terms of assembly, homodimer. Requires Fe(2+) as cofactor.

Its subcellular location is the plastid. The protein resides in the chloroplast. It catalyses the reaction octadecanoyl-[ACP] + 2 reduced [2Fe-2S]-[ferredoxin] + O2 + 2 H(+) = (9Z)-octadecenoyl-[ACP] + 2 oxidized [2Fe-2S]-[ferredoxin] + 2 H2O. Its pathway is lipid metabolism; fatty acid metabolism. Its function is as follows. Converts stearoyl-ACP to oleoyl-ACP by introduction of a cis double bond between carbons 9 and 10 of the acyl chain. The polypeptide is Stearoyl-[acyl-carrier-protein] 9-desaturase, chloroplastic (Helianthus annuus (Common sunflower)).